The sequence spans 216 residues: Uracil phosphoribosyltransferase (216 aa).

Residues 29–30 (RK) and R37 each bind CTP. 30–34 (KNLVR) contacts GTP. A 5-phospho-alpha-D-ribose 1-diphosphate-binding site is contributed by R80. Residue 87 to 96 (EGLLKAFPKA) coordinates CTP. 5-phospho-alpha-D-ribose 1-diphosphate contacts are provided by residues R105 and 140 to 148 (DPMIATAST). Residues I203 and 208–210 (GDA) each bind uracil. D209 is a 5-phospho-alpha-D-ribose 1-diphosphate binding site.

The protein belongs to the UPRTase family. In terms of assembly, homotetramer. Mg(2+) serves as cofactor.

The catalysed reaction is UMP + diphosphate = 5-phospho-alpha-D-ribose 1-diphosphate + uracil. Its pathway is pyrimidine metabolism; UMP biosynthesis via salvage pathway; UMP from uracil: step 1/1. Its activity is regulated as follows. Allosterically activated by GTP. Inhibited by CTP and UMP in combination. Catalyzes the conversion of uracil and 5-phospho-alpha-D-ribose 1-diphosphate (PRPP) to UMP and diphosphate. In Saccharolobus solfataricus (strain ATCC 35092 / DSM 1617 / JCM 11322 / P2) (Sulfolobus solfataricus), this protein is Uracil phosphoribosyltransferase (upp).